The primary structure comprises 806 residues: Ent-atiserene synthase KSL4, chloroplastic (806 aa).

A chloroplast-targeting transit peptide spans 1 to 75 (MGIVALILIK…AKLFKKNEVC (75 aa)). Positions 33 to 56 (ASLAGSGLPKTTPPKTASLQSHSP) are disordered. A compositionally biased stretch (polar residues) spans 45-55 (PPKTASLQSHS). Residues Asp-556, Asp-560, Asn-700, and Glu-708 each coordinate Mg(2+). The DDXXD motif signature appears at 556–560 (DDLFD).

The protein belongs to the terpene synthase family. It depends on Mg(2+) as a cofactor. As to expression, highly expressed in leaves, and, at low levels, in roots, stems and flowers.

Its subcellular location is the plastid. The protein localises to the chloroplast. The catalysed reaction is ent-copalyl diphosphate = ent-atiserene + diphosphate. Its pathway is secondary metabolite biosynthesis; terpenoid biosynthesis. Its function is as follows. Involved in the biosynthesis of ent-kaurene diterpenoids natural products such as oridonin, miltiradiene, eriocalyxin B and nezukol, known to exhibit antitumor, anti-inflammatory and antibacterial activities. Catalyzes the conversion of ent-copalyl diphosphate (ent-CPP) to ent-atiserene. The sequence is that of Ent-atiserene synthase KSL4, chloroplastic from Isodon rubescens (Rabdosia rubescens).